Reading from the N-terminus, the 296-residue chain is Elongation factor Ts (296 aa).

Residues Thr82–Val85 are involved in Mg(2+) ion dislocation from EF-Tu.

This sequence belongs to the EF-Ts family.

The protein resides in the cytoplasm. Functionally, associates with the EF-Tu.GDP complex and induces the exchange of GDP to GTP. It remains bound to the aminoacyl-tRNA.EF-Tu.GTP complex up to the GTP hydrolysis stage on the ribosome. The polypeptide is Elongation factor Ts (Coxiella burnetii (strain CbuG_Q212) (Coxiella burnetii (strain Q212))).